Here is a 235-residue protein sequence, read N- to C-terminus: Serine/arginine-rich splicing factor 7 (235 aa).

The 74-residue stretch at 11-84 folds into the RRM domain; it reads TKVYVGNLGT…SRVRVELSTG (74 aa). Position 24 is an N6-acetyllysine; alternate (K24). K24 is covalently cross-linked (Glycyl lysine isopeptide (Lys-Gly) (interchain with G-Cter in SUMO2); alternate). The residue at position 32 (S32) is a Phosphoserine. A sufficient for interaction with NXF1 region spans residues 81 to 98; it reads LSTGMPRRSRFDRPPARR. The CCHC-type zinc finger occupies 104 to 120; sequence DRCYECGEKGHYAYDCH. Over residues 123-180 the composition is skewed to basic residues; it reads SRRRRSRSRSRSHSRSRGRRYSRSRSRSRGRRSRSASPRRSRSVSLRRSRSASLRRSR. The interval 123–235 is disordered; sequence SRRRRSRSRS…RRSASPERVD (113 aa). 4 consecutive repeat copies span residues 153–160, 161–168, 169–176, and 177–184. Residues 153–223 are 6 X 8 AA repeats of R-R-S-R-S-X-S-X; the sequence is RRSRSASPRR…SPKRSRSPSG (71 aa). Residues S163, S165, and S167 each carry the phosphoserine modification. Phosphoserine occurs at positions 181, 183, 189, 191, and 193. Positions 187-219 are enriched in basic residues; sequence SRSRSRSRSRSRSLSRPRSSRSKSRSPSPKRSR. A 5; approximate repeat occupies 208–215; sequence SKSRSPSP. One copy of the 6; approximate repeat lies at 216-223; the sequence is KRSRSPSG. Phosphoserine occurs at positions 228 and 230.

This sequence belongs to the splicing factor SR family. As to quaternary structure, found in large molecular weight complexes containing CCNL1 and the p110 isoforms of either CDC2L1 or CDC2L2. Interacts with CCNL2 and CPSF6. Interacts with NXF1. Interacts with YTHDC1. Extensively phosphorylated on serine residues in the RS domain.

Its subcellular location is the nucleus. It localises to the cytoplasm. Functionally, required for pre-mRNA splicing. Represses the splicing of MAPT/Tau exon 10. May function as export adapter involved in mRNA nuclear export such as of histone H2A. Binds mRNA which is thought to be transferred to the NXF1-NXT1 heterodimer for export (TAP/NXF1 pathway); enhances NXF1-NXT1 RNA-binding activity. RNA-binding is semi-sequence specific. The chain is Serine/arginine-rich splicing factor 7 (SRSF7) from Bos taurus (Bovine).